Reading from the N-terminus, the 231-residue chain is Dephospho-CoA kinase domain-containing protein (231 aa).

The DPCK domain maps to 3-207 (LVGLTGGIAS…RSMEYLPLRL (205 aa)). 8-15 (GGIASGKS) contributes to the ATP binding site.

Belongs to the CoaE family.

The protein is Dephospho-CoA kinase domain-containing protein (Dcakd) of Mus musculus (Mouse).